The primary structure comprises 717 residues: Pentatricopeptide repeat-containing protein At1g53600, mitochondrial (717 aa).

The transit peptide at 1-47 directs the protein to the mitochondrion; it reads MVMRPISNKGLIYRHNICLRCNSTLAVSNHEPITQKTRNFLETTTTS. 17 PPR repeats span residues 49 to 79, 80 to 110, 111 to 142, 143 to 173, 176 to 206, 207 to 241, 242 to 272, 274 to 308, 309 to 339, 340 to 374, 375 to 401, 402 to 436, 437 to 471, 472 to 502, 503 to 537, 538 to 568, and 574 to 604; these read AIFQ…MSNR, SIVS…MPVR, VTTS…IPEK, NAVS…TPVK, DSVA…MAVK, EVVS…NVIT, WTAM…GDVK, NSNT…PLEF, DLFL…MKNK, DSVS…DMVS, WTDM…MPEK, DNIT…EVCP, NSYT…NIVN, DLSV…ISEP, NIVS…GKEP, NGVT…MKSS, and GPDH…MPCK. The type E motif stretch occupies residues 609 to 684; the sequence is VWGSLLSASK…DPGSSWIILK (76 aa). The type E(+) motif stretch occupies residues 685–715; sequence GEVHNFLAGDESQLNLEEIGFTLKMIRKEME.

This sequence belongs to the PPR family. PCMP-E subfamily.

It localises to the mitochondrion. The protein is Pentatricopeptide repeat-containing protein At1g53600, mitochondrial (PCMP-E63) of Arabidopsis thaliana (Mouse-ear cress).